Reading from the N-terminus, the 366-residue chain is GTP cyclohydrolase 1 type 2 homolog (366 aa).

Residues His64, His65, Asp102, His326, and Glu329 each coordinate Zn(2+).

The protein belongs to the GTP cyclohydrolase I type 2/NIF3 family. In terms of assembly, toroid-shaped homohexamer that has a central cavity of about 38 Angstroms diameter.

The polypeptide is GTP cyclohydrolase 1 type 2 homolog (Staphylococcus aureus (strain Mu50 / ATCC 700699)).